The primary structure comprises 287 residues: 4-hydroxybenzoate octaprenyltransferase (287 aa).

A run of 9 helical transmembrane segments spans residues 21 to 41 (VGIFLLLWPTLWAVWIAAKGA), 44 to 64 (FKIAVIFIAGSVVMRAAGCIV), 91 to 111 (VTEAMLLFAVLSLIAFTLVLL), 112 to 132 (LNRLTVELAVIGILLALVYPF), 139 to 159 (LPQLWLGVAFSWSIPMAFAAT), 160 to 180 (VGHVPAVAWLLFFAAVLWPIV), 211 to 231 (LMIGLLQGSVLLTFGLLGWYL), 235 to 255 (YWFYLGLLVALGLMCYQQFLI), and 263 to 283 (CFAAFRNNNWVGFFIFLGILL).

It belongs to the UbiA prenyltransferase family. Mg(2+) is required as a cofactor.

The protein resides in the cell inner membrane. It catalyses the reaction all-trans-octaprenyl diphosphate + 4-hydroxybenzoate = 4-hydroxy-3-(all-trans-octaprenyl)benzoate + diphosphate. It participates in cofactor biosynthesis; ubiquinone biosynthesis. Catalyzes the prenylation of para-hydroxybenzoate (PHB) with an all-trans polyprenyl group. Mediates the second step in the final reaction sequence of ubiquinone-8 (UQ-8) biosynthesis, which is the condensation of the polyisoprenoid side chain with PHB, generating the first membrane-bound Q intermediate 3-octaprenyl-4-hydroxybenzoate. The protein is 4-hydroxybenzoate octaprenyltransferase of Coxiella burnetii (strain RSA 331 / Henzerling II).